Reading from the N-terminus, the 428-residue chain is Involucrin (428 aa).

Disordered regions lie at residues 1-128 and 140-398; these read MSQQ…EEKK and KRDD…GQAQ. A compositionally biased stretch (basic and acidic residues) spans 56-76; sequence PSKHEEKHVTIVKGVPEHECE. A compositionally biased stretch (low complexity) spans 77-92; that stretch reads QQQQAQGQERQQQHWG. Basic and acidic residues-rich tracts occupy residues 107-117, 162-174, and 192-208; these read LKQEEAQREKQ, QLKH…KPLE, and QLKH…HLEQ. Residues 209-218 show a composition bias toward low complexity; the sequence is QEGQLELPEQ. The segment covering 220 to 297 has biased composition (basic and acidic residues); the sequence is DQPKHLEQLE…CEGQLEHLEQ (78 aa). A compositionally biased stretch (low complexity) spans 298 to 311; sequence QEGQLELPEQQVGQ. Composition is skewed to basic and acidic residues over residues 313 to 327, 352 to 366, and 374 to 385; these read KHLE…HPEQ and QLKDLEQQERQL.

The protein belongs to the involucrin family. As to quaternary structure, directly or indirectly cross-linked to cornifelin (CNFN). Substrate of transglutaminase. Specific glutamines or lysines are cross-linked to keratins, desmoplakin and to inter involucrin molecules. As to expression, keratinocytes of epidermis and other stratified squamous epithelia.

It is found in the cytoplasm. Functionally, part of the insoluble cornified cell envelope (CE) of stratified squamous epithelia. The protein is Involucrin (IVL) of Cebus albifrons (White-fronted capuchin).